Here is a 152-residue protein sequence, read N- to C-terminus: Lipoprotein signal peptidase (152 aa).

The next 3 membrane-spanning stretches (helical) occupy residues 5–25 (LFVLSLILLVALDQLSKFWIV), 61–81 (WFFVVITVLVIGYAIYYLATH), and 84–104 (LNIWKQLALLLIISGGIGNFI). Catalysis depends on residues Asp114 and Asp130. A helical transmembrane segment spans residues 125–145 (IFNVADSYLTVGVILLVICLW).

Belongs to the peptidase A8 family.

Its subcellular location is the cell membrane. The catalysed reaction is Release of signal peptides from bacterial membrane prolipoproteins. Hydrolyzes -Xaa-Yaa-Zaa-|-(S,diacylglyceryl)Cys-, in which Xaa is hydrophobic (preferably Leu), and Yaa (Ala or Ser) and Zaa (Gly or Ala) have small, neutral side chains.. Its pathway is protein modification; lipoprotein biosynthesis (signal peptide cleavage). Functionally, this protein specifically catalyzes the removal of signal peptides from prolipoproteins. In Streptococcus pyogenes serotype M2 (strain MGAS10270), this protein is Lipoprotein signal peptidase.